A 93-amino-acid chain; its full sequence is Pyrimidine/purine nucleoside phosphorylase (93 aa).

The protein belongs to the nucleoside phosphorylase PpnP family.

It catalyses the reaction a purine D-ribonucleoside + phosphate = a purine nucleobase + alpha-D-ribose 1-phosphate. The enzyme catalyses adenosine + phosphate = alpha-D-ribose 1-phosphate + adenine. The catalysed reaction is cytidine + phosphate = cytosine + alpha-D-ribose 1-phosphate. It carries out the reaction guanosine + phosphate = alpha-D-ribose 1-phosphate + guanine. It catalyses the reaction inosine + phosphate = alpha-D-ribose 1-phosphate + hypoxanthine. The enzyme catalyses thymidine + phosphate = 2-deoxy-alpha-D-ribose 1-phosphate + thymine. The catalysed reaction is uridine + phosphate = alpha-D-ribose 1-phosphate + uracil. It carries out the reaction xanthosine + phosphate = alpha-D-ribose 1-phosphate + xanthine. Functionally, catalyzes the phosphorolysis of diverse nucleosides, yielding D-ribose 1-phosphate and the respective free bases. Can use uridine, adenosine, guanosine, cytidine, thymidine, inosine and xanthosine as substrates. Also catalyzes the reverse reactions. The protein is Pyrimidine/purine nucleoside phosphorylase of Photobacterium profundum (strain SS9).